A 296-amino-acid chain; its full sequence is Glycine--tRNA ligase alpha subunit (296 aa).

It belongs to the class-II aminoacyl-tRNA synthetase family. Tetramer of two alpha and two beta subunits.

The protein localises to the cytoplasm. It catalyses the reaction tRNA(Gly) + glycine + ATP = glycyl-tRNA(Gly) + AMP + diphosphate. The protein is Glycine--tRNA ligase alpha subunit of Synechococcus sp. (strain WH7803).